Here is a 349-residue protein sequence, read N- to C-terminus: Peroxidase 22 (349 aa).

A signal peptide spans 1–29 (MGFSPSFSCSAIGALILGCLLLQASNSNA). Q30 is subject to Pyrrolidone carboxylic acid. Disulfide bonds link C40-C120, C73-C78, C126-C329, and C206-C238. H71 functions as the Proton acceptor in the catalytic mechanism. Ca(2+) is bound by residues D72, V75, G77, D79, and S81. N86 is a glycosylation site (N-linked (GlcNAc...) asparagine). Position 168 (P168) interacts with substrate. 2 N-linked (GlcNAc...) asparagine glycosylation sites follow: N173 and N187. Position 199 (H199) interacts with heme b. Ca(2+) is bound at residue T200. N-linked (GlcNAc...) asparagine glycans are attached at residues N217 and N243. Residues D251, T254, and D259 each contribute to the Ca(2+) site.

The protein belongs to the peroxidase family. Classical plant (class III) peroxidase subfamily. Heme b is required as a cofactor. Requires Ca(2+) as cofactor. As to expression, mainly expressed in roots.

Its subcellular location is the secreted. The protein localises to the vacuole. It carries out the reaction 2 a phenolic donor + H2O2 = 2 a phenolic radical donor + 2 H2O. Removal of H(2)O(2), oxidation of toxic reductants, biosynthesis and degradation of lignin, suberization, auxin catabolism, response to environmental stresses such as wounding, pathogen attack and oxidative stress. These functions might be dependent on each isozyme/isoform in each plant tissue. The sequence is that of Peroxidase 22 (PER22) from Arabidopsis thaliana (Mouse-ear cress).